A 152-amino-acid chain; its full sequence is Ribonuclease H (152 aa).

The RNase H type-1 domain maps to 1–142; sequence MNSKVVIYTD…ADKLAVQGRE (142 aa). 4 residues coordinate Mg(2+): Asp10, Glu48, Asp70, and Asp134.

The protein belongs to the RNase H family. Monomer. Requires Mg(2+) as cofactor.

The protein resides in the cytoplasm. The catalysed reaction is Endonucleolytic cleavage to 5'-phosphomonoester.. In terms of biological role, endonuclease that specifically degrades the RNA of RNA-DNA hybrids. This is Ribonuclease H from Rickettsia akari (strain Hartford).